The primary structure comprises 220 residues: UPF0319 protein YccT (220 aa).

An N-terminal signal peptide occupies residues 1–20 (MKTGALATFLALCLPATVFA).

The protein belongs to the UPF0319 family.

In Salmonella heidelberg (strain SL476), this protein is UPF0319 protein YccT.